We begin with the raw amino-acid sequence, 490 residues long: Katanin p60 ATPase-containing subunit A-like 1 (490 aa).

Position 1 is an N-acetylmethionine (methionine 1). Positions 96 to 182 are disordered; it reads PAVWPPPVPA…ASDGEIPKFD (87 aa). Over residues 116–127 the composition is skewed to basic and acidic residues; the sequence is PNREVRPLRKEM. The segment covering 128–139 has biased composition (low complexity); sequence AGVGARGPVGRA. Over residues 143-169 the composition is skewed to basic and acidic residues; the sequence is SKSEKPSASRDKDCRARGRDDKGRKNM. Phosphoserine is present on serine 174. Position 248 to 255 (248 to 255) interacts with ATP; it reads GPPGTGKT.

It belongs to the AAA ATPase family. Katanin p60 subunit A1 subfamily. A-like 1 sub-subfamily. Interacts with KATNB1 and KATNBL1.

The protein localises to the cytoplasm. It localises to the cytoskeleton. Its subcellular location is the spindle pole. It is found in the spindle. The enzyme catalyses n ATP + n H2O + a microtubule = n ADP + n phosphate + (n+1) alpha/beta tubulin heterodimers.. Its function is as follows. Regulates microtubule dynamics in Sertoli cells, a process that is essential for spermiogenesis and male fertility. Severs microtubules in an ATP-dependent manner, promoting rapid reorganization of cellular microtubule arrays. Has microtubule-severing activity in vitro. The chain is Katanin p60 ATPase-containing subunit A-like 1 from Oryctolagus cuniculus (Rabbit).